The chain runs to 126 residues: Fluoride-specific ion channel FluC (126 aa).

The next 4 helical transmembrane spans lie at 4–24 (FMLL…RYLI), 35–55 (GFPY…GVLM), 71–91 (IIGL…MDNV), and 104–124 (LNIL…FQLM). The Na(+) site is built by G78 and T81.

This sequence belongs to the fluoride channel Fluc/FEX (TC 1.A.43) family.

Its subcellular location is the cell inner membrane. The catalysed reaction is fluoride(in) = fluoride(out). With respect to regulation, na(+) is not transported, but it plays an essential structural role and its presence is essential for fluoride channel function. In terms of biological role, fluoride-specific ion channel. Important for reducing fluoride concentration in the cell, thus reducing its toxicity. This is Fluoride-specific ion channel FluC from Aliivibrio salmonicida (strain LFI1238) (Vibrio salmonicida (strain LFI1238)).